Consider the following 608-residue polypeptide: Leucine aminopeptidase 2 (608 aa).

Residues 134-136 (QCQ) and 269-274 (PYGGME) contribute to the substrate site. His-298 provides a ligand contact to Zn(2+). Glu-299 acts as the Proton acceptor in catalysis. 2 residues coordinate Zn(2+): His-302 and Glu-321. Tyr-386 serves as the catalytic Proton donor.

It belongs to the peptidase M1 family. The cofactor is Zn(2+).

It localises to the cytoplasm. It is found in the nucleus. The catalysed reaction is an epoxide + H2O = an ethanediol. In terms of biological role, aminopeptidase that preferentially cleaves di- and tripeptides. Also has low epoxide hydrolase activity (in vitro). Can hydrolyze the epoxide leukotriene LTA(4) but it forms preferentially 5,6-dihydroxy-7,9,11,14-eicosatetraenoic acid rather than the cytokine leukotriene B(4) as the product compared to the homologous mammalian enzyme (in vitro). The protein is Leucine aminopeptidase 2 of Sclerotinia sclerotiorum (strain ATCC 18683 / 1980 / Ss-1) (White mold).